Here is a 347-residue protein sequence, read N- to C-terminus: Probable ribonucleotide transport ATP-binding protein mkl (347 aa).

The ABC transporter domain maps to 16–252 (IEVKGLTKSF…DEPVVRQFLN (237 aa)). 48-55 (GPSGTGKS) serves as a coordination point for ATP.

This sequence belongs to the ABC transporter superfamily.

Functionally, not known, could be involved in the transport of ribonucleotides. This is Probable ribonucleotide transport ATP-binding protein mkl (mkl) from Mycobacterium leprae (strain TN).